A 387-amino-acid polypeptide reads, in one-letter code: 1,3-propanediol dehydrogenase (387 aa).

It belongs to the iron-containing alcohol dehydrogenase family. Homooctamer. Fe cation serves as cofactor.

The enzyme catalyses propane-1,3-diol + NAD(+) = 3-hydroxypropanal + NADH + H(+). The sequence is that of 1,3-propanediol dehydrogenase (dhaT) from Klebsiella pneumoniae.